The chain runs to 479 residues: Ribosomal RNA small subunit methyltransferase F (479 aa).

S-adenosyl-L-methionine contacts are provided by residues Ala125–Lys131, Glu149, Asp176, and Asp194. Cys247 serves as the catalytic Nucleophile.

The protein belongs to the class I-like SAM-binding methyltransferase superfamily. RsmB/NOP family.

It is found in the cytoplasm. The catalysed reaction is cytidine(1407) in 16S rRNA + S-adenosyl-L-methionine = 5-methylcytidine(1407) in 16S rRNA + S-adenosyl-L-homocysteine + H(+). Specifically methylates the cytosine at position 1407 (m5C1407) of 16S rRNA. The polypeptide is Ribosomal RNA small subunit methyltransferase F (Salmonella arizonae (strain ATCC BAA-731 / CDC346-86 / RSK2980)).